We begin with the raw amino-acid sequence, 281 residues long: CCAAT/enhancer-binding protein epsilon (281 aa).

The tract at residues 1–30 is disordered; that stretch reads MSHGTYYECEPRGGQQPLEFSGGRAGPGEL. Residue lysine 121 forms a Glycyl lysine isopeptide (Lys-Gly) (interchain with G-Cter in SUMO2) linkage. The residue at position 181 (serine 181) is a Phosphoserine. Residues 204 to 267 enclose the bZIP domain; the sequence is SLEYRLRRER…DTLRNLFRQI (64 aa). Positions 208-245 are basic motif; it reads RLRRERNNIAVRKSRDKAKRRIMETQQKVLEYMAENER. The tract at residues 246 to 267 is leucine-zipper; the sequence is LRNRVDQLTQELDTLRNLFRQI.

This sequence belongs to the bZIP family. C/EBP subfamily. Binds DNA as a homodimer and as a heterodimer. Can form stable heterodimers with CEBPA, CEBPB and CEBPD. Interacts with GATA1 and SPI1. Interacts with SMARCD2. Phosphorylated.

It is found in the nucleus. Functionally, transcriptional activator. C/EBP are DNA-binding proteins that recognize two different motifs: the CCAAT homology common to many promoters and the enhanced core homology common to many enhancers. Required for the promyelocyte-myelocyte transition in myeloid differentiation. The sequence is that of CCAAT/enhancer-binding protein epsilon (Cebpe) from Mus musculus (Mouse).